Reading from the N-terminus, the 45-residue chain is Cytochrome b559 subunit beta (45 aa).

Threonine 2 is modified (N-acetylthreonine). Residues 2–17 (TSNTPNQEPVSYPIFT) lie on the Cytoplasmic side of the membrane. A helical transmembrane segment spans residues 18-42 (VRWVAVHTLAVPTIFFLGAIAAMQF). Histidine 24 provides a ligand contact to heme. The Lumenal segment spans residues 43-45 (IQR).

Heterodimer of an alpha subunit and a beta subunit. PSII is composed of 1 copy each of membrane proteins PsbA, PsbB, PsbC, PsbD, PsbE, PsbF, PsbH, PsbI, PsbJ, PsbK, PsbL, PsbM, PsbT, PsbX, PsbY, PsbZ, Psb30/Ycf12, peripheral proteins PsbO, CyanoQ (PsbQ), PsbU, PsbV and a large number of cofactors. It forms dimeric complexes. Part of a photosystem II (PSII) assembly intermediate complex PSII-I; crystallized from a strain deleted of psbJ, it forms monomeric PSII before addition of the oxygen evolving complex. PSII-I includes 3 assembly factors not found in mature PSII (Psb27, Psb28 and Psb34). Requires heme b as cofactor.

The protein localises to the cellular thylakoid membrane. This b-type cytochrome is tightly associated with the reaction center of photosystem II (PSII). PSII is a light-driven water:plastoquinone oxidoreductase that uses light energy to abstract electrons from H(2)O, generating O(2) and a proton gradient subsequently used for ATP formation. It consists of a core antenna complex that captures photons, and an electron transfer chain that converts photonic excitation into a charge separation. The sequence is that of Cytochrome b559 subunit beta from Thermosynechococcus vestitus (strain NIES-2133 / IAM M-273 / BP-1).